A 270-amino-acid chain; its full sequence is Small ribosomal subunit protein uS3 (270 aa).

A KH type-2 domain is found at 38–106 (IRQMLTRGME…QVQLNILEVK (69 aa)). Residues 212–270 (EREAAQAAQRAAGPQRRERPGRRRRGGGGGGGQQQQQAEKATAQATEAAKAAKSGNEGS) are disordered. Low complexity-rich tracts occupy residues 216–225 (AQAAQRAAGP) and 245–263 (QQQQ…AKAA).

Belongs to the universal ribosomal protein uS3 family. As to quaternary structure, part of the 30S ribosomal subunit. Forms a tight complex with proteins S10 and S14.

Its function is as follows. Binds the lower part of the 30S subunit head. Binds mRNA in the 70S ribosome, positioning it for translation. The sequence is that of Small ribosomal subunit protein uS3 from Thermobifida fusca (strain YX).